A 54-amino-acid chain; its full sequence is U-myrmicitoxin(01)-Tb5a (54 aa).

Residues 1-26 (MQLSHLLLAFAMIFVMTIMYAPQVQA) form the signal peptide. Positions 27–38 (DAWADANADADV) are excised as a propeptide.

It belongs to the formicidae venom precursor-01 superfamily. In terms of processing, contains 1 disulfide bond. In terms of tissue distribution, expressed by the venom gland.

The protein resides in the secreted. The chain is U-myrmicitoxin(01)-Tb5a from Tetramorium bicarinatum (Tramp ant).